We begin with the raw amino-acid sequence, 1372 residues long: DNA-directed RNA polymerase subunit beta (1372 aa).

It belongs to the RNA polymerase beta chain family. The RNAP catalytic core consists of 2 alpha, 1 beta, 1 beta' and 1 omega subunit. When a sigma factor is associated with the core the holoenzyme is formed, which can initiate transcription.

It catalyses the reaction RNA(n) + a ribonucleoside 5'-triphosphate = RNA(n+1) + diphosphate. Functionally, DNA-dependent RNA polymerase catalyzes the transcription of DNA into RNA using the four ribonucleoside triphosphates as substrates. This is DNA-directed RNA polymerase subunit beta from Psychrobacter arcticus (strain DSM 17307 / VKM B-2377 / 273-4).